Here is a 255-residue protein sequence, read N- to C-terminus: Putative expansin-A27 (255 aa).

The signal sequence occupies residues 1–24 (MGAMAENLLVLCTILAARMALAAA). The Expansin-like EG45 domain occupies 45–160 (GGACGYGNLY…RRVRCWRRGG (116 aa)). The Expansin-like CBD domain occupies 170 to 249 (HFELVLVANV…GWKFGQTFST (80 aa)).

This sequence belongs to the expansin family. Expansin A subfamily.

Its subcellular location is the secreted. It is found in the cell wall. The protein resides in the membrane. In terms of biological role, may cause loosening and extension of plant cell walls by disrupting non-covalent bonding between cellulose microfibrils and matrix glucans. No enzymatic activity has been found. May be required for rapid internodal elongation in deepwater rice during submergence. The polypeptide is Putative expansin-A27 (EXPA27) (Oryza sativa subsp. japonica (Rice)).